Here is a 209-residue protein sequence, read N- to C-terminus: Egg case collagen (209 aa).

The tract at residues 1-129 is nonhelical region; it reads VYMSGXGKPP…YKGNHGFYLV (129 aa). Residues 130–209 form a triple-helical region region; it reads LPAGYPGTPG…DPGLPGEYGV (80 aa). Residues 138 to 209 are disordered; it reads PGTPGPRGGP…DPGLPGEYGV (72 aa). Residues 142–162 are compositionally biased toward gly residues; that stretch reads GPRGGPGDPGMPGEPGVGFPG.

Major component of the egg case wall which is secreted by the oviduct. The egg case combines mechanical strength and toughness with high permeability to small molecules and ions. The chain is Egg case collagen from Scyliorhinus canicula (Small-spotted catshark).